The primary structure comprises 206 residues: N-(5'-phosphoribosyl)anthranilate isomerase (206 aa).

Belongs to the TrpF family.

It catalyses the reaction N-(5-phospho-beta-D-ribosyl)anthranilate = 1-(2-carboxyphenylamino)-1-deoxy-D-ribulose 5-phosphate. It participates in amino-acid biosynthesis; L-tryptophan biosynthesis; L-tryptophan from chorismate: step 3/5. This chain is N-(5'-phosphoribosyl)anthranilate isomerase, found in Pseudomonas savastanoi pv. phaseolicola (strain 1448A / Race 6) (Pseudomonas syringae pv. phaseolicola (strain 1448A / Race 6)).